We begin with the raw amino-acid sequence, 845 residues long: SLIT and NTRK-like protein 2 (845 aa).

An N-terminal signal peptide occupies residues 1–21 (MLSGVWFLSVLTVAGILQTES). Topologically, residues 22-621 (RKTAKDICKI…LHTEVPLSVL (600 aa)) are extracellular. Intrachain disulfides connect C29–C35 and C33–C46. LRR repeat units lie at residues 63-84 (RIYQ…EFVN), 87-108 (NAVT…AFSG), 111-132 (TLKR…TFLG), 135-156 (SLEY…AFSK), 159-180 (KLKV…VFRF), and 182-203 (LLTH…GVLE). N84 carries N-linked (GlcNAc...) asparagine glycosylation. The interval 167-215 (DNLLLSLPSNVFRFVLLTHLDLRGNRLKVMPFAGVLEHIGGIMEIQLEE) is required for interaction with PTPRD. Residues 216-265 (NPWNCTCDLLPLKAWLDTITVFVGEIVCETPFRLHGKDVTQLTRQDLCPR) form the LRRCT 1 domain. Disulfide bonds link C220-C243 and C222-C263. The disordered stretch occupies residues 263 to 321 (CPRKSASDSSQRGSHADTHVQRLSPTMNPALNPTRAPKASRPPKMRNRPTPRVTVSKDR). Over residues 283–293 (QRLSPTMNPAL) the composition is skewed to polar residues. One can recognise an LRRNT domain in the interval 331–373 (QTKSPVPLTCPSSCVCTSQSSDNGLNVNCQERKFTNISDLQPK). LRR repeat units lie at residues 376–397 (SPKK…DLLE), 400–421 (SLDL…AFTN), 424–445 (SLRR…MFDG), 448–469 (SLQY…TFDA), 472–493 (NLQL…IFGG), and 495–516 (ALTR…GVLD). N-linked (GlcNAc...) asparagine glycosylation occurs at N421. Residues 529–580 (NPWDCTCDIMGLKDWTEHANSPVIINEVTCESPAKHAGEILKFLGREAICPD) enclose the LRRCT 2 domain. A helical membrane pass occupies residues 622 to 642 (ILGLLVVFILSVCFGAGLFVF). The Cytoplasmic portion of the chain corresponds to 643–845 (VLKRRKGVPS…LEKQTAISQL (203 aa)). A Phosphotyrosine modification is found at Y756.

This sequence belongs to the SLITRK family. As to quaternary structure, interacts with PTPRD; this interaction is PTPRD splicing-dependent and may induce pre-synaptic differentiation. Interacts with NTRK2. As to expression, expressed predominantly in the cerebral cortex of the brain but also at low levels in the spinal cord and medulla. Also expressed in some astrocytic brain tumors such as astrocytomas, oligodendrogliomas, glioblastomas, gangliogliomas and primitive neuroectodermal tumors.

It is found in the membrane. The protein resides in the cell membrane. Its subcellular location is the cell projection. The protein localises to the dendrite. It is involved in synaptogenesis and promotes excitatory synapse differentiation. Suppresses neurite outgrowth. Involved in the negative regulation of NTRK2. The sequence is that of SLIT and NTRK-like protein 2 (SLITRK2) from Homo sapiens (Human).